We begin with the raw amino-acid sequence, 656 residues long: Receptor-type tyrosine-protein phosphatase R (656 aa).

The first 23 residues, 1–23, serve as a signal peptide directing secretion; it reads MRRAVGFPALCLLLNLHAAGCFS. The O-linked (Xyl...) (chondroitin sulfate) serine glycan is linked to S23. Residues 25 to 225 are Extracellular-facing; it reads NNDHFLAIRQ…HEADKIWSKE (201 aa). Residue N128 is glycosylated (N-linked (GlcNAc...) asparagine). A helical membrane pass occupies residues 226–248; the sequence is GFYAVVIFLSIFIIIVTCLMIIY. The Cytoplasmic segment spans residues 249-656; the sequence is RLKERLQLSF…ESRLSPETVQ (408 aa). At S271 the chain carries Phosphoserine. S338 carries the post-translational modification Phosphoserine; by PKA. Residues 392–646 enclose the Tyrosine-protein phosphatase domain; it reads LQSEFMEIPM…EFVHHALCLF (255 aa). Substrate is bound by residues D553, 587 to 593, and Q631; that span reads CSAGIGR. Catalysis depends on C587, which acts as the Phosphocysteine intermediate.

It belongs to the protein-tyrosine phosphatase family. Receptor class 7 subfamily. Interacts with MAPKs. As to expression, widely expressed in the brain, most abundant in cerebellum, midbrain, cerebral cortex and hippocampus. Also expressed in heart and skeletal muscle.

Its subcellular location is the cytoplasm. It is found in the cell membrane. The enzyme catalyses O-phospho-L-tyrosyl-[protein] + H2O = L-tyrosyl-[protein] + phosphate. In terms of biological role, sequesters mitogen-activated protein kinases (MAPKs) such as MAPK1, MAPK3 and MAPK14 in the cytoplasm in an inactive form. The MAPKs bind to a dephosphorylated kinase interacting motif, phosphorylation of which by the protein kinase A complex releases the MAPKs for activation and translocation into the nucleus. This chain is Receptor-type tyrosine-protein phosphatase R (Ptprr), found in Rattus norvegicus (Rat).